We begin with the raw amino-acid sequence, 355 residues long: Protein RecA (355 aa).

Residue 67-74 (GPESSGKT) participates in ATP binding.

This sequence belongs to the RecA family.

It localises to the cytoplasm. Can catalyze the hydrolysis of ATP in the presence of single-stranded DNA, the ATP-dependent uptake of single-stranded DNA by duplex DNA, and the ATP-dependent hybridization of homologous single-stranded DNAs. It interacts with LexA causing its activation and leading to its autocatalytic cleavage. This chain is Protein RecA, found in Shewanella piezotolerans (strain WP3 / JCM 13877).